The chain runs to 1063 residues: Kinesin-like protein KIN-7H (1063 aa).

The 325-residue stretch at 18–342 (KIYVSVRMRP…LLFASCAKEV (325 aa)) folds into the Kinesin motor domain. ATP is bound at residue 106 to 113 (GQTSSGKT). Residues 351-436 (VMSDKALVKH…KNQEKETLST (86 aa)) adopt a coiled-coil conformation. A disordered region spans residues 574-664 (SDISIGPVEN…ESNLTKNPAL (91 aa)).

Belongs to the TRAFAC class myosin-kinesin ATPase superfamily. Kinesin family. KIN-7 subfamily.

The sequence is that of Kinesin-like protein KIN-7H from Arabidopsis thaliana (Mouse-ear cress).